Reading from the N-terminus, the 106-residue chain is Large ribosomal subunit protein cL38 (106 aa).

The transit peptide at 1–39 (MSVSAIFGTGIVTVAASPVLRQFQVPKLGNGGGLGMVIE) directs the protein to the chloroplast. Residues 42 to 70 (SRPQKKSTAHHRKTRPKKTQPWDIKRKPT) form a disordered region. Over residues 44-59 (PQKKSTAHHRKTRPKK) the composition is skewed to basic residues.

It belongs to the chloroplast-specific ribosomal protein cL38 family. Part of the 50S ribosomal subunit.

It localises to the plastid. Its subcellular location is the chloroplast. The sequence is that of Large ribosomal subunit protein cL38 (PSRP6) from Arabidopsis thaliana (Mouse-ear cress).